A 392-amino-acid polypeptide reads, in one-letter code: MSRVPTPPPPGEMTSGPVAESWCYTQVKVVKFSYMWTINNFSFCREEMGEVVRSSTFSSGPNDKMKWCLRVNPKGLDDESKDYLSLYLLLVSCPKSEVRAKFKFSLLNAKREETKAMESQRAYRFVQGKDWGFKKFIRRDFLLDEANGLLPDDKLTLFCEVSVVQDSVNISGQSNTNMLKVPECQLSDDLGNLWEGSRFTDCSLFVGGQEFKAHKSILAARSPVFNAMFEHKMEESKKNRVDISDVEPDVFREMMVFIYTGKAPNLEKMADNLLAAADKYALERLKVLCEEALCNSLSVENVADVLILADLHSAEQLKAQAIDFINRCSVLRQLGCKDGKNWNSNHAADIMETAGWKAMIQSHPHLVAEAFRALASAQCTPFGLPRKRLKQS.

The MATH domain occupies 31-161; the sequence is KFSYMWTINN…DDKLTLFCEV (131 aa). A BTB domain is found at 200–267; sequence TDCSLFVGGQ…IYTGKAPNLE (68 aa).

The protein belongs to the Tdpoz family. In terms of assembly, homodimer. Heterodimer with SPOP. Component of cullin-RING-based BCR (BTB-CUL3-RBX1) E3 ubiquitin-protein ligase complexes containing homodimeric SPOPL or the heterodimer formed by SPOP and SPOPL.

It localises to the nucleus. The protein operates within protein modification; protein ubiquitination. Component of a cullin-RING-based BCR (BTB-CUL3-RBX1) E3 ubiquitin-protein ligase complex that mediates the ubiquitination and subsequent proteasomal degradation of target proteins, but with relatively low efficiency. This is Speckle-type POZ protein-like B (spoplb) from Danio rerio (Zebrafish).